A 432-amino-acid chain; its full sequence is Cyclic di-GMP phosphodiesterase CdgJ (432 aa).

The region spanning 1–232 (MVRCLWAAEC…QRYVSPEHVI (232 aa)) is the EAL domain. An HDOD domain is found at 226 to 413 (VSPEHVIAMQ…CLELGFDLED (188 aa)).

It catalyses the reaction 3',3'-c-di-GMP + H2O = 5'-phosphoguanylyl(3'-&gt;5')guanosine + H(+). Functionally, phosphodiesterase (PDE) that catalyzes the hydrolysis of cyclic diguanylate (c-di-GMP). Positively regulates motility and negatively regulates biofilm formation. The polypeptide is Cyclic di-GMP phosphodiesterase CdgJ (Vibrio cholerae serotype O1 (strain ATCC 39315 / El Tor Inaba N16961)).